The following is a 568-amino-acid chain: Arginine--tRNA ligase (568 aa).

The 'HIGH' region motif lies at 129–139 (ANPTGPLHIGH).

It belongs to the class-I aminoacyl-tRNA synthetase family. In terms of assembly, monomer.

The protein localises to the cytoplasm. The catalysed reaction is tRNA(Arg) + L-arginine + ATP = L-arginyl-tRNA(Arg) + AMP + diphosphate. This Wolbachia pipientis wMel protein is Arginine--tRNA ligase.